The chain runs to 657 residues: Putative GreA-associated domains protein (657 aa).

The region spanning 1–152 (MDTRDLTAYS…EQEGNKEKAT (152 aa)) is the GRAD2 domain. The 505-residue stretch at 153–657 (EFYKKALYRF…TAGSFGTLWE (505 aa)) folds into the GRAD1 domain.

In Treponema pallidum (strain Nichols), this protein is Putative GreA-associated domains protein.